A 102-amino-acid polypeptide reads, in one-letter code: Small ribosomal subunit protein uS14 (102 aa).

This sequence belongs to the universal ribosomal protein uS14 family. As to quaternary structure, part of the 30S ribosomal subunit. Contacts proteins S3 and S10.

Binds 16S rRNA, required for the assembly of 30S particles and may also be responsible for determining the conformation of the 16S rRNA at the A site. This chain is Small ribosomal subunit protein uS14, found in Dichelobacter nodosus (strain VCS1703A).